Consider the following 443-residue polypeptide: MSGEQVDILVVDDDISHCTILQALLRGWGYRVALANNGLQALEKVREKVFDLVLCDIRMAEMDGIETLKEIKTFNPSIPVLIMTAYSSVDTAVEALKSGALDYLIKPLDFDKLQLTLSEALAHTRLSESPVTETPAAQFGMVGDSPAMRALLNNITLVAPSDATVLIHGESGTGKELVARALHASSARSRRPLVILNCAALNESLLESELFGHEKGAFTGADKRREGRFVEADGGTLFLDEIGDISPLMQVRLLRAIQEREVQRVGSNQTLSVDVRLIAATHRDLAEEVSAGRFRQDLYYRLNVVTIDMPPLRHRREDIPPLARYFLQRYAERNRKAVQGFTPQAMDLLIHYAWPGNIRELENAVERAVVLLTGEYISERELPLAITGTPVADAPHGDDSIQPLVEVEKEAILAALERTGGNKTEAARRLGITRKTLLAKLSR.

Positions Asp7–Leu121 constitute a Response regulatory domain. Asp56 is modified (4-aspartylphosphate). The region spanning Met141–Val370 is the Sigma-54 factor interaction domain. 4 residues coordinate ATP: Gly172, Thr173, Arg329, and Arg359. A DNA-binding region (H-T-H motif) is located at residues Lys423 to Ser442.

Post-translationally, phosphorylated by ZraS.

It is found in the cytoplasm. Its activity is regulated as follows. Activity of the ZraS/ZraR two-component system is repressed by the zinc-bound form of ZraP, which probably interacts with the periplasmic region of ZraS. In terms of biological role, part of the Zra signaling pathway, an envelope stress response (ESR) system composed of the periplasmic accessory protein ZraP, the histidine kinase ZraS and the transcriptional regulator ZraR. The ZraPSR system contributes to antibiotic resistance and is important for membrane integrity in the presence of membrane-targeting biocides. ZraR is a member of the two-component regulatory system ZraS/ZraR. When activated by ZraS, acts in conjunction with sigma-54 to regulate the expression of zraP in the presence of high Zn(2+) or Pb(2+) concentrations. Also positively autoregulates the expression of the zraSR operon. This is Transcriptional regulatory protein ZraR (zraR) from Klebsiella oxytoca.